Consider the following 140-residue polypeptide: Large ribosomal subunit protein uL14 (140 aa).

It belongs to the universal ribosomal protein uL14 family.

This chain is Large ribosomal subunit protein uL14 (RPL23), found in Brugia malayi (Filarial nematode worm).